The sequence spans 125 residues: Phosphoribosyl-AMP cyclohydrolase (125 aa).

Asp80 contacts Mg(2+). A Zn(2+)-binding site is contributed by Cys81. Residues Asp82 and Asp84 each contribute to the Mg(2+) site. Residues Cys97 and Cys104 each coordinate Zn(2+).

Belongs to the PRA-CH family. Homodimer. Mg(2+) serves as cofactor. Requires Zn(2+) as cofactor.

It is found in the cytoplasm. The enzyme catalyses 1-(5-phospho-beta-D-ribosyl)-5'-AMP + H2O = 1-(5-phospho-beta-D-ribosyl)-5-[(5-phospho-beta-D-ribosylamino)methylideneamino]imidazole-4-carboxamide. It functions in the pathway amino-acid biosynthesis; L-histidine biosynthesis; L-histidine from 5-phospho-alpha-D-ribose 1-diphosphate: step 3/9. Its function is as follows. Catalyzes the hydrolysis of the adenine ring of phosphoribosyl-AMP. In Leifsonia xyli subsp. xyli (strain CTCB07), this protein is Phosphoribosyl-AMP cyclohydrolase.